The primary structure comprises 955 residues: Serine-aspartate repeat-containing protein C (955 aa).

Positions 1–50 are cleaved as a signal peptide; the sequence is MNNKKTVTNRKGMIPNRLNKFSIRKYSVGTASILVGTTLIFGLSGHEAKA. The segment at 51-166 is disordered; the sequence is AEHTNGELNQ…TPKTTTIKPR (116 aa). A ligand binding A region region spans residues 51 to 495; sequence AEHTNGELNQ…GSSTANGDQK (445 aa). Positions 56 to 71 are enriched in polar residues; the sequence is GELNQSKNETTAPSEN. Positions 72 to 83 are enriched in basic and acidic residues; that stretch reads KTTEKVDSHQLK. Residues 84–114 are compositionally biased toward polar residues; the sequence is DNTQTATADQPKVTMSDSATFKETSSNMQSP. The segment covering 115 to 132 has biased composition (low complexity); that stretch reads QNATASQSTTQTSNVTTN. A compositionally biased stretch (polar residues) spans 133–164; the sequence is DKSSTTYSNETDKSNLTQAKDVSATPKTTTIK. CNA-B domains are found at residues 496-606 and 607-717; these read KYNL…YKTP and KYSL…EEET. The interval 678–935 is disordered; that stretch reads TQTGTNTTED…NNSNNGTLFG (258 aa). Acidic residues-rich tracts occupy residues 685 to 695 and 712 to 894; these read TEDDKDADGGE and YYEE…DSDS. An LPXTG sorting signal motif is present at residues 918–922; it reads LPETG. Residues 920-935 are compositionally biased toward low complexity; sequence ETGSENNNSNNGTLFG. Residue T921 is modified to Pentaglycyl murein peptidoglycan amidated threonine. Positions 922–955 are cleaved as a propeptide — removed by sortase; sequence GSENNNSNNGTLFGGLFAALGSLLLFGRRKKQNK.

The protein belongs to the serine-aspartate repeat-containing protein (SDr) family. Homodimerizes; via N2-Domain. Interacts with host NRXN1; this interaction mediates bacterial attachment to host cells.

Its subcellular location is the secreted. It is found in the cell wall. Its function is as follows. Cell surface-associated calcium-binding protein which plays an important role in adhesion and pathogenesis. Mediates interactions with components of the extracellular matrix such as host NRXN1 to promote bacterial adhesion. The polypeptide is Serine-aspartate repeat-containing protein C (sdrC) (Staphylococcus aureus (strain MW2)).